The sequence spans 190 residues: dCTP deaminase, dUMP-forming (190 aa).

DCTP is bound by residues 101–106 (KSSLGR), D119, 127–129 (TLE), Q148, Y162, and Q174. The active-site Proton donor/acceptor is the E129. Residues 161 to 190 (PYGSSGVGSKYQGQRGPTPSRSYQNFIRST) form a disordered region. Over residues 171–190 (YQGQRGPTPSRSYQNFIRST) the composition is skewed to polar residues.

It belongs to the dCTP deaminase family. Homotrimer.

It carries out the reaction dCTP + 2 H2O = dUMP + NH4(+) + diphosphate. It participates in pyrimidine metabolism; dUMP biosynthesis; dUMP from dCTP: step 1/1. Functionally, bifunctional enzyme that catalyzes both the deamination of dCTP to dUTP and the hydrolysis of dUTP to dUMP without releasing the toxic dUTP intermediate. The polypeptide is dCTP deaminase, dUMP-forming (Mycobacterium marinum (strain ATCC BAA-535 / M)).